Reading from the N-terminus, the 241-residue chain is Phosphatidylglycerophosphatase B (241 aa).

A helical transmembrane segment spans residues Met1 to Gly21. Topologically, residues Ile22–Leu52 are periplasmic. The chain crosses the membrane as a helical span at residues Ile53–Phe62. Topologically, residues Ala63–Lys67 are cytoplasmic. Residues Asn68–Thr91 traverse the membrane as a helical segment. The Periplasmic portion of the chain corresponds to Gly92–Ser158. Positions Lys94–Pro102 are phosphatase sequence motif I. Residues Pro157–His160 form a phosphatase sequence motif II region. The helical transmembrane segment at Gly159 to Gly173 threads the bilayer. His160 acts as the Proton donor; for a subset of substrates in catalysis. The Cytoplasmic segment spans residues Phe174–Lys184. A helical transmembrane segment spans residues Ala185–Val204. Residues Ser202–Asp213 are phosphatase sequence motif III. Residues Arg205–Tyr210 are Periplasmic-facing. Residue His209 is the Nucleophile of the active site. The helical transmembrane segment at Pro211–Lys235 threads the bilayer. Residues Ala236–Lys241 are Cytoplasmic-facing.

It belongs to the PA-phosphatase related phosphoesterase family.

The protein localises to the cell inner membrane. It is found in the cell outer membrane. The catalysed reaction is a 1,2-diacyl-sn-glycero-3-phospho-(1'-sn-glycero-3'-phosphate) + H2O = a 1,2-diacyl-sn-glycero-3-phospho-(1'-sn-glycerol) + phosphate. It carries out the reaction a 1,2-diacyl-sn-glycerol 3-diphosphate + H2O = a 1,2-diacyl-sn-glycero-3-phosphate + phosphate + H(+). It catalyses the reaction a 1,2-diacyl-sn-glycero-3-phosphate + H2O = a 1,2-diacyl-sn-glycerol + phosphate. The enzyme catalyses di-trans,octa-cis-undecaprenyl diphosphate + H2O = di-trans,octa-cis-undecaprenyl phosphate + phosphate + H(+). It participates in phospholipid metabolism; phosphatidylglycerol biosynthesis; phosphatidylglycerol from CDP-diacylglycerol: step 2/2. Its function is as follows. Catalyzes the dephosphorylation of diacylglycerol diphosphate (DGPP) to phosphatidate (PA) and the subsequent dephosphorylation of PA to diacylglycerol (DAG). Also has undecaprenyl pyrophosphate phosphatase activity, required for the biosynthesis of the lipid carrier undecaprenyl phosphate. Can also use lysophosphatidic acid (LPA) and phosphatidylglycerophosphate as substrates. The pattern of activities varies according to subcellular location, PGP phosphatase activity is higher in the cytoplasmic membrane, whereas PA and LPA phosphatase activities are higher in the outer membrane. Activity is independent of a divalent cation ion and insensitive to inhibition by N-ethylmaleimide. This chain is Phosphatidylglycerophosphatase B (pgpB), found in Haemophilus influenzae (strain ATCC 51907 / DSM 11121 / KW20 / Rd).